Here is a 50-residue protein sequence, read N- to C-terminus: Photosystem II reaction center protein M (50 aa).

A helical membrane pass occupies residues glycine 7–isoleucine 27.

This sequence belongs to the PsbM family. In terms of assembly, PSII is composed of 1 copy each of membrane proteins PsbA, PsbB, PsbC, PsbD, PsbE, PsbF, PsbH, PsbI, PsbJ, PsbK, PsbL, PsbM, PsbT, PsbX, PsbY, Psb30/Ycf12, peripheral proteins PsbO, CyanoQ (PsbQ), PsbU, PsbV and a large number of cofactors. It forms dimeric complexes.

The protein localises to the cellular thylakoid membrane. Functionally, one of the components of the core complex of photosystem II (PSII). PSII is a light-driven water:plastoquinone oxidoreductase that uses light energy to abstract electrons from H(2)O, generating O(2) and a proton gradient subsequently used for ATP formation. It consists of a core antenna complex that captures photons, and an electron transfer chain that converts photonic excitation into a charge separation. This subunit is found at the monomer-monomer interface. This chain is Photosystem II reaction center protein M, found in Prochlorococcus marinus (strain MIT 9312).